The sequence spans 92 residues: Small ribosomal subunit protein uS19 (92 aa).

The protein belongs to the universal ribosomal protein uS19 family.

Protein S19 forms a complex with S13 that binds strongly to the 16S ribosomal RNA. The protein is Small ribosomal subunit protein uS19 of Rickettsia felis (strain ATCC VR-1525 / URRWXCal2) (Rickettsia azadi).